The primary structure comprises 92 residues: Large ribosomal subunit protein bL25 (92 aa).

Belongs to the bacterial ribosomal protein bL25 family. In terms of assembly, part of the 50S ribosomal subunit; part of the 5S rRNA/L5/L18/L25 subcomplex. Contacts the 5S rRNA. Binds to the 5S rRNA independently of L5 and L18.

Its function is as follows. This is one of the proteins that binds to the 5S RNA in the ribosome where it forms part of the central protuberance. The protein is Large ribosomal subunit protein bL25 of Aliivibrio fischeri (strain MJ11) (Vibrio fischeri).